Here is a 141-residue protein sequence, read N- to C-terminus: Ribonuclease VapC16 (141 aa).

Asp99 contributes to the Mg(2+) binding site. Residues 99 to 141 (DHAHTAHRRASGSPSTSIRPCAHRPGTAAWPDDHHRRRPVSCL) are disordered.

Belongs to the PINc/VapC protein family. Mg(2+) is required as a cofactor.

Its function is as follows. Toxic component of a type II toxin-antitoxin (TA) system. An RNase. The cognate antitoxin is VapB16. This is Ribonuclease VapC16 from Mycobacterium tuberculosis (strain ATCC 25618 / H37Rv).